A 941-amino-acid chain; its full sequence is Endoplasmic reticulum aminopeptidase 1 (941 aa).

Met1 is a topological domain (cytoplasmic). The helical; Signal-anchor for type II membrane protein transmembrane segment at 2 to 21 threads the bilayer; sequence VFLPLKWSLATMSFLLSSLL. The Lumenal portion of the chain corresponds to 22 to 941; that stretch reads ALLTVSTPSW…WLQSEKLERM (920 aa). N-linked (GlcNAc...) asparagine glycosylation is found at Asn70 and Asn154. Substrate-binding positions include Glu183 and 317-321; that span reads GAMEN. His353 lines the Zn(2+) pocket. Glu354 functions as the Proton acceptor in the catalytic mechanism. Zn(2+)-binding residues include His357 and Glu376. Intrachain disulfides connect Cys404/Cys443 and Cys736/Cys743. An N-linked (GlcNAc...) asparagine glycan is attached at Asn414. Residues Asn760 and Asn901 are each glycosylated (N-linked (GlcNAc...) asparagine).

The protein belongs to the peptidase M1 family. As to quaternary structure, monomer. May also exist as a heterodimer; with ERAP2. Interacts with RBMX. It depends on Zn(2+) as a cofactor. In terms of processing, N-glycosylated. As to expression, ubiquitous.

The protein localises to the endoplasmic reticulum membrane. Functionally, aminopeptidase that plays a central role in peptide trimming, a step required for the generation of most HLA class I-binding peptides. Peptide trimming is essential to customize longer precursor peptides to fit them to the correct length required for presentation on MHC class I molecules. Strongly prefers substrates 9-16 residues long. Rapidly degrades 13-mer to a 9-mer and then stops. Preferentially hydrolyzes the residue Leu and peptides with a hydrophobic C-terminus, while it has weak activity toward peptides with charged C-terminus. May play a role in the inactivation of peptide hormones. May be involved in the regulation of blood pressure through the inactivation of angiotensin II and/or the generation of bradykinin in the kidney. The sequence is that of Endoplasmic reticulum aminopeptidase 1 (ERAP1) from Homo sapiens (Human).